Reading from the N-terminus, the 40-residue chain is Amyloid-beta precursor protein (40 aa).

It belongs to the APP family. In terms of assembly, binds, via its C-terminus, to the PID domain of several cytoplasmic proteins, including APBB family members, the APBA family, MAPK8IP1, SHC1 and NUMB and DAB1. Binding to DAB1 inhibits its serine phosphorylation. Interacts (via NPXY motif) with DAB2 (via PID domain); the interaction is impaired by tyrosine phosphorylation of the NPXY motif. Also interacts with GPCR-like protein BPP, APPBP1, IB1, KNS2 (via its TPR domains), APPBP2 (via BaSS) and DDB1. In vitro, it binds MAPT via the MT-binding domains. Associates with microtubules in the presence of ATP and in a kinesin-dependent manner. Interacts, through a C-terminal domain, with GNAO1. Interacts with CPEB1, ANKS1B and AGER. Interacts with ITM2B. Interacts with ITM2C. Interacts with IDE. Can form homodimers; dimerization is enhanced in the presence of Cu(2+) ions. Can form homodimers; this is promoted by heparin binding. Interacts with SORL1 (via N-terminal ectodomain); this interaction retains APP in the trans-Golgi network and reduces processing into soluble APP-alpha and amyloid-beta peptides. Interacts with PLD3. Interacts with VDAC1. Interacts with NSG1; could regulate APP processing. Interacts with LRRK2. Interacts (via cytoplasmic domain) with KIF5B. Interacts (via C-terminus) with APBB2/FE65L1 (via C-terminus). Interacts (via intracellular domain) with APBB3. Post-translationally, proteolytically processed under normal cellular conditions. Cleavage either by alpha-secretase, beta-secretase or theta-secretase leads to generation and extracellular release of soluble APP peptides, S-APP-alpha and S-APP-beta, and the retention of corresponding membrane-anchored C-terminal fragments, C80, C83 and C99. Subsequent processing of C80 and C83 by gamma-secretase yields P3 peptides. This is the major secretory pathway and is non-amyloidogenic. Alternatively, presenilin/nicastrin-mediated gamma-secretase processing of C99 releases the amyloid-beta proteins, amyloid-beta protein 40 and amyloid-beta protein 42, major components of amyloid plaques, and the cytotoxic C-terminal fragments, gamma-CTF(50), gamma-CTF(57) and gamma-CTF(59). PSEN1 cleavage is more efficient with C83 than with C99 as substrate (in vitro). Amyloid-beta protein 40 and Amyloid-beta protein 42 are cleaved by ACE. Many other minor amyloid-beta peptides, amyloid-beta 1-X peptides, are found in cerebral spinal fluid (CSF) including the amyloid-beta X-15 peptides, produced from the cleavage by alpha-secretase.

It localises to the cell membrane. Its subcellular location is the membrane. The protein localises to the perikaryon. It is found in the cell projection. The protein resides in the growth cone. It localises to the clathrin-coated pit. Its subcellular location is the early endosome. The protein localises to the cytoplasmic vesicle. In terms of biological role, functions as a cell surface receptor and performs physiological functions on the surface of neurons relevant to neurite growth, neuronal adhesion and axonogenesis. Interaction between APP molecules on neighboring cells promotes synaptogenesis. Involved in cell mobility and transcription regulation through protein-protein interactions. Can promote transcription activation through binding to APBB1-KAT5 and inhibit Notch signaling through interaction with Numb. Couples to apoptosis-inducing pathways such as those mediated by G(o) and JIP. Inhibits G(o)-alpha ATPase activity. Acts as a kinesin I membrane receptor, mediating the axonal transport of beta-secretase and presenilin 1. May be involved in copper homeostasis/oxidative stress through copper ion reduction. In vitro, copper-metallated APP induces neuronal death directly or is potentiated through Cu(2+)-mediated low-density lipoprotein oxidation. Can regulate neurite outgrowth through binding to components of the extracellular matrix such as heparin and collagen I and IV. Induces a AGER-dependent pathway that involves activation of p38 MAPK, resulting in internalization of amyloid-beta peptide and mitochondrial dysfunction in cultured cortical neurons. Provides Cu(2+) ions for GPC1 which are required for release of nitric oxide (NO) and subsequent degradation of the heparan sulfate chains on GPC1. This chain is Amyloid-beta precursor protein, found in Felis catus (Cat).